We begin with the raw amino-acid sequence, 214 residues long: Glycerol-3-phosphate acyltransferase (214 aa).

5 consecutive transmembrane segments (helical) span residues 8-28, 70-90, 111-131, 144-164, and 165-185; these read LILA…QIFF, LLPL…LIAV, AGVV…IFIV, IVVA…GIIL, and PSYD…ILIR.

The protein belongs to the PlsY family. Probably interacts with PlsX.

The protein localises to the cell membrane. It catalyses the reaction an acyl phosphate + sn-glycerol 3-phosphate = a 1-acyl-sn-glycero-3-phosphate + phosphate. The protein operates within lipid metabolism; phospholipid metabolism. In terms of biological role, catalyzes the transfer of an acyl group from acyl-phosphate (acyl-PO(4)) to glycerol-3-phosphate (G3P) to form lysophosphatidic acid (LPA). This enzyme utilizes acyl-phosphate as fatty acyl donor, but not acyl-CoA or acyl-ACP. In Streptococcus gordonii (strain Challis / ATCC 35105 / BCRC 15272 / CH1 / DL1 / V288), this protein is Glycerol-3-phosphate acyltransferase.